A 369-amino-acid polypeptide reads, in one-letter code: 4-hydroxyproline betaine 2-epimerase (369 aa).

Substrate-binding residues include Tyr-56 and Gln-162. Lys-164 acts as the Proton donor/acceptor in catalysis. Asp-194, Glu-219, and Asp-242 together coordinate Mg(2+). Lys-266 serves as the catalytic Proton donor/acceptor. Ala-295 serves as a coordination point for substrate.

Belongs to the mandelate racemase/muconate lactonizing enzyme family. The cofactor is Mg(2+).

It catalyses the reaction trans-4-hydroxy-L-proline betaine = cis-4-hydroxy-D-proline betaine. The enzyme catalyses L-proline betaine = D-proline betaine. Catalyzes the 2-epimerization of trans-4-hydroxy-L-proline betaine (tHyp-B) to cis-4-hydroxy-D-proline betaine (cHyp-B). Is involved in a catabolic pathway that degrades tHyp-B to alpha-ketoglutarate. This pathway would permit the utilization of tHyp-B as a carbon and nitrogen source in the absence of osmotic stress, since tHyp-B functions as an osmolyte and is not catabolized when it is needed as osmoprotectant. Can also catalyze the racemization of L-proline betaine. The sequence is that of 4-hydroxyproline betaine 2-epimerase (hpbD) from Paracoccus denitrificans (strain Pd 1222).